A 54-amino-acid chain; its full sequence is ATP synthase F(0) complex subunit 8 (54 aa).

The helical transmembrane segment at 9 to 25 (WVFLFFLVWLVLGFLGL) threads the bilayer.

The protein belongs to the ATPase protein 8 family. As to quaternary structure, component of the ATP synthase complex composed at least of ATP5F1A/subunit alpha, ATP5F1B/subunit beta, ATP5MC1/subunit c (homooctomer), MT-ATP6/subunit a, MT-ATP8/subunit 8, ATP5ME/subunit e, ATP5MF/subunit f, ATP5MG/subunit g, ATP5MK/subunit k, ATP5MJ/subunit j, ATP5F1C/subunit gamma, ATP5F1D/subunit delta, ATP5F1E/subunit epsilon, ATP5PF/subunit F6, ATP5PB/subunit b, ATP5PD/subunit d, ATP5PO/subunit OSCP. ATP synthase complex consists of a soluble F(1) head domain (subunits alpha(3) and beta(3)) - the catalytic core - and a membrane F(0) domain - the membrane proton channel (subunits c, a, 8, e, f, g, k and j). These two domains are linked by a central stalk (subunits gamma, delta, and epsilon) rotating inside the F1 region and a stationary peripheral stalk (subunits F6, b, d, and OSCP).

The protein localises to the mitochondrion membrane. Functionally, subunit 8, of the mitochondrial membrane ATP synthase complex (F(1)F(0) ATP synthase or Complex V) that produces ATP from ADP in the presence of a proton gradient across the membrane which is generated by electron transport complexes of the respiratory chain. ATP synthase complex consist of a soluble F(1) head domain - the catalytic core - and a membrane F(1) domain - the membrane proton channel. These two domains are linked by a central stalk rotating inside the F(1) region and a stationary peripheral stalk. During catalysis, ATP synthesis in the catalytic domain of F(1) is coupled via a rotary mechanism of the central stalk subunits to proton translocation. In vivo, can only synthesize ATP although its ATP hydrolase activity can be activated artificially in vitro. Part of the complex F(0) domain. This chain is ATP synthase F(0) complex subunit 8, found in Branchiostoma lanceolatum (Common lancelet).